Here is a 258-residue protein sequence, read N- to C-terminus: UPF0246 protein YaaA (258 aa).

This sequence belongs to the UPF0246 family.

In Escherichia coli O127:H6 (strain E2348/69 / EPEC), this protein is UPF0246 protein YaaA.